Reading from the N-terminus, the 395-residue chain is Terminal nucleotidyltransferase 5B (395 aa).

It belongs to the TENT family.

It localises to the cytoplasm. The protein resides in the nucleus. It catalyses the reaction RNA(n) + ATP = RNA(n)-3'-adenine ribonucleotide + diphosphate. Catalyzes the transfer of one adenosine molecule from an ATP to an mRNA poly(A) tail bearing a 3'-OH terminal group in an ATP hydrolysis-dependent manner and participates in cytoplasmic polyadenylation. May be involved in maintaining the translation efficiency of at least some genes through preventing degradation of their mRNAs. The sequence is that of Terminal nucleotidyltransferase 5B from Xenopus tropicalis (Western clawed frog).